Here is a 603-residue protein sequence, read N- to C-terminus: Aspartate--tRNA(Asp/Asn) ligase (603 aa).

Position 172 (E172) interacts with L-aspartate. The aspartate stretch occupies residues 196–199 (QLFK). Position 218 (R218) interacts with L-aspartate. ATP-binding positions include 218–220 (RDE) and Q227. Position 457 (H457) interacts with L-aspartate. E491 contacts ATP. R498 lines the L-aspartate pocket. Residue 543-546 (GLDR) coordinates ATP.

Belongs to the class-II aminoacyl-tRNA synthetase family. Type 1 subfamily. Homodimer.

The protein localises to the cytoplasm. The enzyme catalyses tRNA(Asx) + L-aspartate + ATP = L-aspartyl-tRNA(Asx) + AMP + diphosphate. Its function is as follows. Aspartyl-tRNA synthetase with relaxed tRNA specificity since it is able to aspartylate not only its cognate tRNA(Asp) but also tRNA(Asn). Reaction proceeds in two steps: L-aspartate is first activated by ATP to form Asp-AMP and then transferred to the acceptor end of tRNA(Asp/Asn). In Laribacter hongkongensis (strain HLHK9), this protein is Aspartate--tRNA(Asp/Asn) ligase.